The sequence spans 503 residues: Variant surface glycoprotein AnTaT 1.1 (503 aa).

Positions 1–29 (MVTKERNAALKIVMLVASALTLHPQQALA) are cleaved as a signal peptide. Disulfide bonds link Cys-45-Cys-172 and Cys-154-Cys-209. An N-linked (GlcNAc...) asparagine glycan is attached at Asn-113. N-linked (GlcNAc...) asparagine glycosylation is found at Asn-419 and Asn-432. Asp-480 is lipidated: GPI-anchor amidated aspartate. Residues 481-503 (SSILLTKNFALSVVSAALVALLF) constitute a propeptide, removed in mature form.

It localises to the cell membrane. Its function is as follows. VSG forms a coat on the surface of the parasite. The trypanosome evades the immune response of the host by expressing a series of antigenically distinct VSGs from an estimated 1000 VSG genes. This Trypanosoma brucei brucei protein is Variant surface glycoprotein AnTaT 1.1.